The chain runs to 484 residues: Dynein regulatory complex subunit 2 (484 aa).

2 coiled-coil regions span residues 92 to 160 and 374 to 403; these read VDCK…RKTI and KEQE…GMEN.

Belongs to the DRC2 family. In terms of assembly, component of the nexin-dynein regulatory complex (N-DRC). Interacts with DRC1.

It localises to the cytoplasm. It is found in the cytoskeleton. The protein localises to the flagellum basal body. Its subcellular location is the cell projection. The protein resides in the cilium. It localises to the flagellum. It is found in the flagellum axoneme. Its function is as follows. Component of the nexin-dynein regulatory complex (N-DRC), a key regulator of ciliary/flagellar motility which maintains the alignment and integrity of the distal axoneme and regulates microtubule sliding in motile axonemes. Plays a critical role in the assembly of N-DRC and also stabilizes the assembly of multiple inner dynein arms and radial spokes. Coassembles with DRC1 to form a central scaffold needed for assembly of the N-DRC and its attachment to the outer doublet microtubules. This chain is Dynein regulatory complex subunit 2 (CCDC65), found in Macaca fascicularis (Crab-eating macaque).